The chain runs to 364 residues: MFEAVEEVLREYADLERRLADPAVHADPRTARTLGRRYAQLGPIVEAYRRWKALDADVAAAHELAAADPAFRAEIPALEAEREAVAERLRSLLAPADPNDGKDVIMQIKAGEGGEESALFAGDLLRMYLRYAERRGWKTEILDATESDLGGYKDVTVAIRADGSEGAWSRLKFEGGVHRVQRVPVTESQGRIHTSAVGVLVMPEAEEVDVQIDPNDLRIDVFRSSGPGGQSVNTTDSAVRITHLPTGIVVSCQNEKSQLQNKETALRILRSRLLALAQEEAEAQAAAQRRSQVRTVDRSERIRTYNFPENRISDHRVNYKAYNLDQVLDGDLDGVIQALVDADAAARLAAAEQDPTRPVLSRQR.

At Gln-230 the chain carries N5-methylglutamine.

It belongs to the prokaryotic/mitochondrial release factor family. Post-translationally, methylated by PrmC. Methylation increases the termination efficiency of RF1.

It localises to the cytoplasm. Its function is as follows. Peptide chain release factor 1 directs the termination of translation in response to the peptide chain termination codons UAG and UAA. This is Peptide chain release factor 1 from Acidothermus cellulolyticus (strain ATCC 43068 / DSM 8971 / 11B).